A 124-amino-acid polypeptide reads, in one-letter code: Ribulose bisphosphate carboxylase small subunit (124 aa).

It belongs to the RuBisCO small chain family. Heterohexadecamer of 8 large and 8 small subunits.

Its function is as follows. RuBisCO catalyzes two reactions: the carboxylation of D-ribulose 1,5-bisphosphate, the primary event in carbon dioxide fixation, as well as the oxidative fragmentation of the pentose substrate. Both reactions occur simultaneously and in competition at the same active site. Although the small subunit is not catalytic it is essential for maximal activity. The chain is Ribulose bisphosphate carboxylase small subunit from Hydrogenophilus thermoluteolus (Pseudomonas hydrogenothermophila).